The chain runs to 377 residues: Nitric oxide reductase FlRd-NAD(+) reductase (377 aa).

Belongs to the FAD-dependent oxidoreductase family. It depends on FAD as a cofactor.

It localises to the cytoplasm. The enzyme catalyses 2 reduced [nitric oxide reductase rubredoxin domain] + NAD(+) + H(+) = 2 oxidized [nitric oxide reductase rubredoxin domain] + NADH. The protein operates within nitrogen metabolism; nitric oxide reduction. In terms of biological role, one of at least two accessory proteins for anaerobic nitric oxide (NO) reductase. Reduces the rubredoxin moiety of NO reductase. In Escherichia coli O17:K52:H18 (strain UMN026 / ExPEC), this protein is Nitric oxide reductase FlRd-NAD(+) reductase.